Here is a 480-residue protein sequence, read N- to C-terminus: tRNA modification GTPase MnmE (480 aa).

Residues Arg-20, Glu-114, and Lys-154 each coordinate (6S)-5-formyl-5,6,7,8-tetrahydrofolate. The TrmE-type G domain occupies 250–406 (GLKLAIIGPP…ILKNIENIAE (157 aa)). Asn-260 contacts K(+). GTP contacts are provided by residues 260 to 265 (NVGKSS), 279 to 285 (SNIAGTT), and 304 to 307 (DTAG). A Mg(2+)-binding site is contributed by Ser-264. K(+) contacts are provided by Ser-279, Ile-281, and Thr-284. Thr-285 contributes to the Mg(2+) binding site. (6S)-5-formyl-5,6,7,8-tetrahydrofolate is bound at residue Lys-480.

It belongs to the TRAFAC class TrmE-Era-EngA-EngB-Septin-like GTPase superfamily. TrmE GTPase family. In terms of assembly, homodimer. Heterotetramer of two MnmE and two MnmG subunits. K(+) serves as cofactor.

It is found in the cytoplasm. In terms of biological role, exhibits a very high intrinsic GTPase hydrolysis rate. Involved in the addition of a carboxymethylaminomethyl (cmnm) group at the wobble position (U34) of certain tRNAs, forming tRNA-cmnm(5)s(2)U34. This Rickettsia felis (strain ATCC VR-1525 / URRWXCal2) (Rickettsia azadi) protein is tRNA modification GTPase MnmE.